A 353-amino-acid chain; its full sequence is Peptide-N(4)-(N-acetyl-beta-glucosaminyl)asparagine amidase (353 aa).

Residues cysteine 125, cysteine 128, and cysteine 159 each coordinate Zn(2+). Cysteine 185 serves as the catalytic Nucleophile. Residues histidine 212 and aspartate 229 contribute to the active site. Glutamate 232 serves as a coordination point for substrate. The disordered stretch occupies residues 316-353; sequence SLEKTKPSKDTSTTTLTGTKGRESGSTAWKQQRGEDGS. Over residues 325–334 the composition is skewed to low complexity; sequence DTSTTTLTGT.

The protein belongs to the transglutaminase-like superfamily. PNGase family. Zn(2+) serves as cofactor.

It is found in the cytoplasm. It carries out the reaction Hydrolysis of an N(4)-(acetyl-beta-D-glucosaminyl)asparagine residue in which the glucosamine residue may be further glycosylated, to yield a (substituted) N-acetyl-beta-D-glucosaminylamine and a peptide containing an aspartate residue.. In terms of biological role, specifically deglycosylates the denatured form of N-linked glycoproteins in the cytoplasm and assists their proteasome-mediated degradation. Cleaves the beta-aspartyl-glucosamine (GlcNAc) of the glycan and the amide side chain of Asn, converting Asn to Asp. Prefers proteins containing high-mannose over those bearing complex type oligosaccharides. Can recognize misfolded proteins in the endoplasmic reticulum that are exported to the cytosol to be destroyed and deglycosylate them, while it has no activity toward native proteins. Deglycosylation is a prerequisite for subsequent proteasome-mediated degradation of some, but not all, misfolded glycoproteins. The sequence is that of Peptide-N(4)-(N-acetyl-beta-glucosaminyl)asparagine amidase (PNG1) from Kluyveromyces lactis (strain ATCC 8585 / CBS 2359 / DSM 70799 / NBRC 1267 / NRRL Y-1140 / WM37) (Yeast).